We begin with the raw amino-acid sequence, 417 residues long: Gamma-glutamyl phosphate reductase (417 aa).

This sequence belongs to the gamma-glutamyl phosphate reductase family.

It localises to the cytoplasm. The catalysed reaction is L-glutamate 5-semialdehyde + phosphate + NADP(+) = L-glutamyl 5-phosphate + NADPH + H(+). It participates in amino-acid biosynthesis; L-proline biosynthesis; L-glutamate 5-semialdehyde from L-glutamate: step 2/2. Its function is as follows. Catalyzes the NADPH-dependent reduction of L-glutamate 5-phosphate into L-glutamate 5-semialdehyde and phosphate. The product spontaneously undergoes cyclization to form 1-pyrroline-5-carboxylate. The sequence is that of Gamma-glutamyl phosphate reductase from Bacteroides thetaiotaomicron (strain ATCC 29148 / DSM 2079 / JCM 5827 / CCUG 10774 / NCTC 10582 / VPI-5482 / E50).